A 330-amino-acid chain; its full sequence is 3',5'-cyclic-nucleotide phosphodiesterase (330 aa).

Positions 1–22 (MFKNKLAVLFTCLSVFSFSAQS) are cleaved as a signal peptide.

This sequence belongs to the cyclic nucleotide phosphodiesterase class-II family.

The protein localises to the periplasm. It carries out the reaction a nucleoside 3',5'-cyclic phosphate + H2O = a nucleoside 5'-phosphate + H(+). Its function is as follows. Seems to allow the organism to grow on cAMP. The chain is 3',5'-cyclic-nucleotide phosphodiesterase (cpdP) from Aliivibrio fischeri (Vibrio fischeri).